A 130-amino-acid polypeptide reads, in one-letter code: MMPAKKTARKRRVKKHVESGVAHIHSTFNNTLVMITDVQGNAVAWSSAGALGFKGSRKSTPFAAQMAAEAAAKSAMDQGMKHVEVSVKGPGAGRESAIRSLQATGLEITAIRDVTPVPHNGSRPPKRRRA.

The segment at 111 to 130 is disordered; sequence IRDVTPVPHNGSRPPKRRRA.

The protein belongs to the universal ribosomal protein uS11 family. As to quaternary structure, part of the 30S ribosomal subunit. Interacts with proteins S7 and S18. Binds to IF-3.

Functionally, located on the platform of the 30S subunit, it bridges several disparate RNA helices of the 16S rRNA. Forms part of the Shine-Dalgarno cleft in the 70S ribosome. This chain is Small ribosomal subunit protein uS11, found in Lactobacillus acidophilus (strain ATCC 700396 / NCK56 / N2 / NCFM).